The following is a 269-amino-acid chain: Energy-coupling factor transporter ATP-binding protein EcfA1 (269 aa).

The 235-residue stretch at 8–242 folds into the ABC transporter domain; it reads IVFKNVSFQY…AEELTRIGLD (235 aa). 42–49 is an ATP binding site; the sequence is GHNGSGKS.

Belongs to the ABC transporter superfamily. Energy-coupling factor EcfA family. Forms a stable energy-coupling factor (ECF) transporter complex composed of 2 membrane-embedded substrate-binding proteins (S component), 2 ATP-binding proteins (A component) and 2 transmembrane proteins (T component).

Its subcellular location is the cell membrane. Functionally, ATP-binding (A) component of a common energy-coupling factor (ECF) ABC-transporter complex. Unlike classic ABC transporters this ECF transporter provides the energy necessary to transport a number of different substrates. The polypeptide is Energy-coupling factor transporter ATP-binding protein EcfA1 (Staphylococcus aureus (strain USA300)).